The chain runs to 35 residues: UPF0387 membrane protein YohO (35 aa).

The chain crosses the membrane as a helical span at residues 6–26 (IGVIALFLLMAIGGIGGVMLA).

The protein belongs to the UPF0387 family.

It localises to the cell inner membrane. In Salmonella paratyphi A (strain ATCC 9150 / SARB42), this protein is UPF0387 membrane protein YohO.